The following is a 35-amino-acid chain: Phospholipase A2 neuwieditoxin-1 (35 aa).

The Ca(2+) site is built by tyrosine 27, glycine 29, and glycine 31.

The protein belongs to the phospholipase A2 family. Group II subfamily. D49 sub-subfamily. In terms of assembly, dimer. Ca(2+) is required as a cofactor. In terms of tissue distribution, expressed by the venom gland.

It is found in the secreted. It catalyses the reaction a 1,2-diacyl-sn-glycero-3-phosphocholine + H2O = a 1-acyl-sn-glycero-3-phosphocholine + a fatty acid + H(+). In terms of biological role, snake venom phospholipase A2 (PLA2) that shows presynaptic neurotoxicity. 10 ug/ml of this protein produce complete neuromuscular blockade up to 80 minutes, without inhibiting the responses to acetylcholine (ACh) and potassium chloride (KCl). In addition, it produces a calcium-dependent blockade of acetylcholine release and causes appearance of giant miniature end-plate potentials. PLA2 catalyzes the calcium-dependent hydrolysis of the 2-acyl groups in 3-sn-phosphoglycerides. The protein is Phospholipase A2 neuwieditoxin-1 of Bothrops pauloensis (Neuwied's lancehead).